Reading from the N-terminus, the 231-residue chain is uncharacterized protein (231 aa).

Helical transmembrane passes span I6–I26, N39–S59, and F66–F86.

The protein resides in the cell membrane. This is an uncharacterized protein from Rickettsia prowazekii (strain Madrid E).